Here is a 123-residue protein sequence, read N- to C-terminus: Small ribosomal subunit protein uS12 (123 aa).

Positions Met-1–Pro-22 are disordered. Asp-89 carries the 3-methylthioaspartic acid modification. The disordered stretch occupies residues Gly-100 to Lys-123. Over residues Asn-111–Lys-123 the composition is skewed to basic residues.

It belongs to the universal ribosomal protein uS12 family. Part of the 30S ribosomal subunit. Contacts proteins S8 and S17. May interact with IF1 in the 30S initiation complex.

With S4 and S5 plays an important role in translational accuracy. In terms of biological role, interacts with and stabilizes bases of the 16S rRNA that are involved in tRNA selection in the A site and with the mRNA backbone. Located at the interface of the 30S and 50S subunits, it traverses the body of the 30S subunit contacting proteins on the other side and probably holding the rRNA structure together. The combined cluster of proteins S8, S12 and S17 appears to hold together the shoulder and platform of the 30S subunit. The polypeptide is Small ribosomal subunit protein uS12 (Pseudomonas putida (strain GB-1)).